A 609-amino-acid polypeptide reads, in one-letter code: MEGKPMRRCTNIRPGETGMDVTSRCTLGDPNKLPEGVPQPARMPYISDKHPRQTLEVINLLRKHRELCDVVLVVGAKKIYAHRVILSACSPYFRAMFTGELAESRQTEVVIRDIDERAMELLIDFAYTSQITVEEGNVQTLLPAACLLQLAEIQEACCEFLKRQLDPSNCLGIRAFADTHSCRELLRIADKFTQHNFQEVMESEEFMLLPANQLIDIISSDELNVRSEEQVFNAVMAWVKYSIQERRPQLPQVLQHVRLPLLSPKFLVGTVGSDPLIKSDEECRDLVDEAKNYLLLPQERPLMQGPRTRPRKPIRCGEVLFAVGGWCSGDAISSVERYDPQTNEWRMVASMSKRRCGVGVSVLDDLLYAVGGHDGSSYLNSVERYDPKTNQWSSDVAPTSTCRTSVGVAVLGGFLYAVGGQDGVSCLNIVERYDPKENKWTRVASMSTRRLGVAVAVLGGFLYAVGGSDGTSPLNTVERYNPQENRWHTIAPMGTRRKHLGCAVYQDMIYAVGGRDDTTELSSAERYNPRTNQWSPVVAMTSRRSGVGLAVVNGQLMAVGGFDGTTYLKTIEVFDPDANTWRLYGGMNYRRLGGGVGVIKMTHCESHIW.

Positions C68 to E135 constitute a BTB domain. The region spanning C170–G272 is the BACK domain. 6 Kelch repeats span residues V319–D365, L367–G413, F414–G460, L462–D507, I509–G554, and L556–M601.

In terms of assembly, component of the BCR(KLHL20) E3 ubiquitin ligase complex, at least composed of CUL3, KLHL20 and RBX1. Interacts with PDZ-RhoGEF/ARHGEF11, DAPK1, PML and CORO7. Interacts with F-actin. Interacts with IFN-gamma (IFNG). Interacts (via kelch repeats) with IVNS1ABP (via kelch repeats); this interaction blocks the assembly of CUL3-KLHL20 complex.

The protein resides in the cytoplasm. The protein localises to the perinuclear region. Its subcellular location is the nucleus. It localises to the golgi apparatus. It is found in the trans-Golgi network. The protein resides in the cell projection. The protein localises to the axon. Its subcellular location is the dendrite. It participates in protein modification; protein ubiquitination. In terms of biological role, substrate-specific adapter of a BCR (BTB-CUL3-RBX1) E3 ubiquitin-protein ligase complex involved in interferon response and anterograde Golgi to endosome transport. The BCR(KLHL20) E3 ubiquitin ligase complex mediates the ubiquitination of DAPK1, leading to its degradation by the proteasome, thereby acting as a negative regulator of apoptosis. The BCR(KLHL20) E3 ubiquitin ligase complex also specifically mediates 'Lys-33'-linked ubiquitination. Involved in anterograde Golgi to endosome transport by mediating 'Lys-33'-linked ubiquitination of CORO7, promoting interaction between CORO7 and EPS15, thereby facilitating actin polymerization and post-Golgi trafficking. Also acts as a regulator of endothelial migration during angiogenesis by controlling the activation of Rho GTPases. The BCR(KLHL20) E3 ubiquitin ligase complex acts as a regulator of neurite outgrowth by mediating ubiquitination and degradation of PDZ-RhoGEF/ARHGEF11. This Bos taurus (Bovine) protein is Kelch-like protein 20 (KLHL20).